A 201-amino-acid polypeptide reads, in one-letter code: uncharacterized protein (201 aa).

Residues 11–31 (IIILTIMILTIIIFTRTINGL) form a helical membrane-spanning segment.

The protein resides in the membrane. This is an uncharacterized protein from Acanthamoeba polyphaga mimivirus (APMV).